The following is a 375-amino-acid chain: LIM domain-binding protein 1 (375 aa).

Disordered regions lie at residues 248 to 294 (PPAE…TFAL) and 331 to 375 (DAAN…QASQ). Residues 266–282 (SGGSTMSSGGGNTNNSN) are compositionally biased toward low complexity. Positions 300 to 339 (DVMVVGEPTLMGGEFGDEDERLITRLENTQFDAANGIDDE) constitute an LIM interaction domain (LID) domain.

It belongs to the LDB family. Forms homodimers and heterodimers. Interacts with the LIM domain of LIM/homeobox factor lhx1/lim1, and with lhx3/lim3 and lhx5/lim5. Activates lhx1/lim1 by binding. The stoichiometry of lhx1/lim1 and ldb1 is important for their function and an excess of ldb1 can inhibit lhx1/lim1 function. When bound to lhx1/lim1, escapes degradation by rnf12. The N-terminus interacts with the N-terminal region of rnf12. Post-translationally, undergoes rnf12-mediated ubiquitin-proteasome-dependent degradation. In terms of tissue distribution, ubiquitously expressed in the early gastrula before localizing to the dorsal region of the vegetal hemisphere, which contains the Spemann organizer. Expressed in the CNS, pronephros and tail bud in neurula and tail-bud stage embryos. Expressed in multiple adult tissues including brain, heart, lung, stomach, intestine, liver, spleen, kidney, ovary, muscle and skin.

The protein localises to the nucleus. In terms of biological role, binds to the LIM domain of a wide variety of LIM domain-containing transcription factors. Acts as a coactivator together with otx2 to stimulate lhx1/lim1-mediated activation of the gsc promoter in the Spemann organizer. Acts synergistically with lhx1/lim1 and ssbp in axis formation. The protein is LIM domain-binding protein 1 (ldb1) of Xenopus laevis (African clawed frog).